We begin with the raw amino-acid sequence, 192 residues long: Pyridoxal 5'-phosphate synthase subunit PdxT (192 aa).

47 to 49 (GES) is an L-glutamine binding site. Catalysis depends on C79, which acts as the Nucleophile. Residues R106 and 134–135 (IR) contribute to the L-glutamine site. Residues H170 and E172 each act as charge relay system in the active site.

The protein belongs to the glutaminase PdxT/SNO family. In the presence of PdxS, forms a dodecamer of heterodimers. Only shows activity in the heterodimer.

It catalyses the reaction aldehydo-D-ribose 5-phosphate + D-glyceraldehyde 3-phosphate + L-glutamine = pyridoxal 5'-phosphate + L-glutamate + phosphate + 3 H2O + H(+). It carries out the reaction L-glutamine + H2O = L-glutamate + NH4(+). It functions in the pathway cofactor biosynthesis; pyridoxal 5'-phosphate biosynthesis. Its function is as follows. Catalyzes the hydrolysis of glutamine to glutamate and ammonia as part of the biosynthesis of pyridoxal 5'-phosphate. The resulting ammonia molecule is channeled to the active site of PdxS. The protein is Pyridoxal 5'-phosphate synthase subunit PdxT of Anoxybacillus flavithermus (strain DSM 21510 / WK1).